The sequence spans 113 residues: Protein INCREASED RESISTANCE TO MYZUS PERSICAE 1 (113 aa).

The FLZ-type zinc-finger motif lies at 56–100 (DFLKTCSLCNRSLCHHRDIYMYRGNNAFCSLECREKQIKLDEKKA).

This sequence belongs to the FLZ family. As to quaternary structure, interacts with KIN10 and KIN11 via its FLZ-type zinc finger domain. Interacts with KINB3 via its N-terminal part. Interacts with GEBP.

It localises to the nucleus. Its subcellular location is the cytoplasm. In terms of biological role, may act as an adapter to facilitate the interaction of SnRK1 complex with effector proteins, conferring tissue- and stimulus-type specific differences in the SnRK1 regulation pathway. This is Protein INCREASED RESISTANCE TO MYZUS PERSICAE 1 from Arabidopsis thaliana (Mouse-ear cress).